The primary structure comprises 573 residues: Proline--tRNA ligase (573 aa).

Belongs to the class-II aminoacyl-tRNA synthetase family. ProS type 1 subfamily. In terms of assembly, homodimer.

It is found in the cytoplasm. The catalysed reaction is tRNA(Pro) + L-proline + ATP = L-prolyl-tRNA(Pro) + AMP + diphosphate. Its function is as follows. Catalyzes the attachment of proline to tRNA(Pro) in a two-step reaction: proline is first activated by ATP to form Pro-AMP and then transferred to the acceptor end of tRNA(Pro). As ProRS can inadvertently accommodate and process non-cognate amino acids such as alanine and cysteine, to avoid such errors it has two additional distinct editing activities against alanine. One activity is designated as 'pretransfer' editing and involves the tRNA(Pro)-independent hydrolysis of activated Ala-AMP. The other activity is designated 'posttransfer' editing and involves deacylation of mischarged Ala-tRNA(Pro). The misacylated Cys-tRNA(Pro) is not edited by ProRS. The polypeptide is Proline--tRNA ligase (Geobacter sp. (strain M21)).